The sequence spans 197 residues: Nucleoid occlusion factor SlmA (197 aa).

The HTH tetR-type domain occupies 7–67 (ISRREHILQC…GLIEFIEDSL (61 aa)). The H-T-H motif DNA-binding region spans 30–49 (TTAKLAAEVGVSEAALYRHF).

The protein belongs to the nucleoid occlusion factor SlmA family. In terms of assembly, homodimer. Interacts with FtsZ.

Its subcellular location is the cytoplasm. It is found in the nucleoid. Functionally, required for nucleoid occlusion (NO) phenomenon, which prevents Z-ring formation and cell division over the nucleoid. Acts as a DNA-associated cell division inhibitor that binds simultaneously chromosomal DNA and FtsZ, and disrupts the assembly of FtsZ polymers. SlmA-DNA-binding sequences (SBS) are dispersed on non-Ter regions of the chromosome, preventing FtsZ polymerization at these regions. The polypeptide is Nucleoid occlusion factor SlmA (Shewanella amazonensis (strain ATCC BAA-1098 / SB2B)).